The sequence spans 627 residues: MDRKQKQAEKARPYGLLKPAALGKIPGRFQLHQEALPHLPVPPLQQTLDRYLLALQPIISEEELNHTQELVAEFRKPGGVGERLQKGLERRAKKTDNWLSDWWLKTAYLEYRLPVVVHSSPGVVLPKQDFQDRQGQLRFAAKLIEGILDFKTMIDNETLPVEYMGGKPLCMNQYYQILSSCRIPGPKRDSIVNYAKGKKQSRHITVVHNFQFFELDVYNSDGSPLTTDQLFIQLEKIWNTSLQTNKEPVGILTTNHRNSWAKAYNNLLKDKTNKESVRTIEKSICTICLDAPMPRVSDDIYKSPVAAQMLHGGGSRWNSGNRWFDKTLQFIIAEDGSCGLVYEHAPAEGPPIVALLDHIVEYTKKPELVRSPMIPLPMPKKLRFNITPEIKSDIEKAKQNLNIMVEDLDVIVLVFHQFGKNYPKSEKISPDAFIQLALQLAYYRMYGHSCATYESASLRMFRLGRTDTIRSTSIESHKFVQSMDSPDKSDQEKADLLRRATQAHKEYTNMAIQGNAIDRHLLGLKLQAIEDLVSIPELFMDTAYAVAMHFNLSTSQVPAKTDCVMCFGPVVPDGYGICYNPMGEHINFAISAFNSCADTNAARMAHYLEKALLDMRSLLQSAPKSKL.

A propeptide spanning residues 1–30 is cleaved from the precursor; sequence MDRKQKQAEKARPYGLLKPAALGKIPGRFQ. Lysine 94 is subject to N6-succinyllysine. Lysine 262 carries the N6-acetyllysine; alternate modification. An N6-succinyllysine; alternate modification is found at lysine 262. Lysine 269 is modified (N6-acetyllysine). Catalysis depends on histidine 344, which acts as the Proton acceptor. CoA-binding positions include lysine 420 and 424–431; that span reads KSEKISPD. Tyrosine 453 and serine 455 together coordinate (R)-carnitine. Serine 457 contributes to the CoA binding site. A (R)-carnitine-binding site is contributed by threonine 466. Glutamine 556 provides a ligand contact to CoA. The short motif at 625–627 is the Microbody targeting signal element; that stretch reads SKL.

This sequence belongs to the carnitine/choline acetyltransferase family. As to quaternary structure, monomer.

Its subcellular location is the endoplasmic reticulum. The protein resides in the peroxisome. It localises to the mitochondrion inner membrane. It catalyses the reaction (R)-carnitine + acetyl-CoA = O-acetyl-(R)-carnitine + CoA. The enzyme catalyses propanoyl-CoA + (R)-carnitine = O-propanoyl-(R)-carnitine + CoA. It carries out the reaction butanoyl-CoA + (R)-carnitine = O-butanoyl-(R)-carnitine + CoA. The catalysed reaction is hexanoyl-CoA + (R)-carnitine = O-hexanoyl-(R)-carnitine + CoA. It catalyses the reaction octanoyl-CoA + (R)-carnitine = O-octanoyl-(R)-carnitine + CoA. The enzyme catalyses decanoyl-CoA + (R)-carnitine = O-decanoyl-(R)-carnitine + CoA. It carries out the reaction 3-methylbutanoyl-CoA + (R)-carnitine = O-3-methylbutanoyl-(R)-carnitine + CoA. The catalysed reaction is 2-methylpropanoyl-CoA + (R)-carnitine = O-isobutanoyl-(R)-carnitine + CoA. It catalyses the reaction 2-methylbutanoyl-CoA + (R)-carnitine = O-2-methylbutanoyl-(R)-carnitine + CoA. The enzyme catalyses acetoacetyl-CoA + (R)-carnitine = O-3-oxobutanoyl-(R)-carnitine + CoA. It carries out the reaction 3-hydroxybutanoyl-CoA + (R)-carnitine = O-3-hydroxybutanoyl-(R)-carnitine + CoA. The catalysed reaction is 4,8-dimethylnonanoyl-CoA + (R)-carnitine = O-4,8-dimethylnonanoyl-(R)-carnitine + CoA. It catalyses the reaction 2,6-dimethylheptanoyl-CoA + (R)-carnitine = O-2,6-dimethylheptanoyl-(R)-carnitine + CoA. Functionally, catalyzes the reversible transfer of acyl groups from carnitine to coenzyme A (CoA) and regulates the acyl-CoA/CoA ratio. Also plays a crucial role in the transport of fatty acids for beta-oxidation. Responsible for the synthesis of short- and branched-chain acylcarnitines. Active towards some branched-chain amino acid oxidation pathway (BCAAO) intermediates. Trans-2-enoyl-CoAs and 2-methylacyl-CoAs are poor substrates. The sequence is that of Carnitine O-acetyltransferase (CRAT) from Columba livia (Rock dove).